Reading from the N-terminus, the 283-residue chain is Pantothenate synthetase (283 aa).

ATP is bound at residue 26 to 33 (MGNLHDGH). The active-site Proton donor is the His-33. Gln-57 is a (R)-pantoate binding site. Position 57 (Gln-57) interacts with beta-alanine. ATP is bound at residue 148 to 151 (GKKD). (R)-pantoate is bound at residue Gln-154. Residues Ala-177 and 185–188 (LSSR) contribute to the ATP site.

The protein belongs to the pantothenate synthetase family. As to quaternary structure, homodimer.

The protein localises to the cytoplasm. It catalyses the reaction (R)-pantoate + beta-alanine + ATP = (R)-pantothenate + AMP + diphosphate + H(+). Its pathway is cofactor biosynthesis; (R)-pantothenate biosynthesis; (R)-pantothenate from (R)-pantoate and beta-alanine: step 1/1. In terms of biological role, catalyzes the condensation of pantoate with beta-alanine in an ATP-dependent reaction via a pantoyl-adenylate intermediate. This Delftia acidovorans (strain DSM 14801 / SPH-1) protein is Pantothenate synthetase.